Here is a 188-residue protein sequence, read N- to C-terminus: MAERANDIRPGQVLEHNGGLFLVVGIMHTQPGKGGAYIQAEMKNIKTGAKHYERFRSDATIRRAILDEEEYVYLFTEGNIVNLMHPSNYEQITINLDLLGEKKIYLQDNMKIKVVAYQDKIISAHVPDYVTLAVKETESVIKGQTATASYKPAILENGMRVNVPQFIKEEDKIVVYTPDDSYYERVKE.

It belongs to the elongation factor P family.

It is found in the cytoplasm. Its pathway is protein biosynthesis; polypeptide chain elongation. In terms of biological role, involved in peptide bond synthesis. Stimulates efficient translation and peptide-bond synthesis on native or reconstituted 70S ribosomes in vitro. Probably functions indirectly by altering the affinity of the ribosome for aminoacyl-tRNA, thus increasing their reactivity as acceptors for peptidyl transferase. In Wolbachia sp. subsp. Drosophila simulans (strain wRi), this protein is Elongation factor P.